The following is a 100-amino-acid chain: Proline-rich protein 15-like protein (100 aa).

Residues 26 to 100 (PDTYTQSEGG…LFDDREGKGQ (75 aa)) form a disordered region. Positions 53-62 (RLEKIVDKNT) are enriched in basic and acidic residues.

The protein belongs to the PRR15 family.

This chain is Proline-rich protein 15-like protein (PRR15L), found in Bos taurus (Bovine).